The chain runs to 301 residues: 3-dehydroquinate dehydratase (301 aa).

The tract at residues Met1–Ile221 is 3-dehydroquinate dehydratase. 3-dehydroquinate contacts are provided by residues Glu32 to Arg34 and Arg63. His119 (proton donor/acceptor) is an active-site residue. The active-site Schiff-base intermediate with substrate is the Lys145. Residues Arg183, Thr202, and Gln206 each contribute to the 3-dehydroquinate site. Residues Thr222–Ala301 enclose the Chorismate mutase domain.

It belongs to the type-I 3-dehydroquinase family. As to quaternary structure, homodimer.

The enzyme catalyses 3-dehydroquinate = 3-dehydroshikimate + H2O. The protein operates within metabolic intermediate biosynthesis; chorismate biosynthesis; chorismate from D-erythrose 4-phosphate and phosphoenolpyruvate: step 3/7. Its function is as follows. Involved in the third step of the chorismate pathway, which leads to the biosynthesis of aromatic amino acids. Catalyzes the cis-dehydration of 3-dehydroquinate (DHQ) and introduces the first double bond of the aromatic ring to yield 3-dehydroshikimate. This Pyrobaculum aerophilum (strain ATCC 51768 / DSM 7523 / JCM 9630 / CIP 104966 / NBRC 100827 / IM2) protein is 3-dehydroquinate dehydratase.